A 575-amino-acid polypeptide reads, in one-letter code: Eukaryotic translation initiation factor 3 subunit D (575 aa).

Disordered regions lie at residues proline 36 to arginine 66 and serine 103 to valine 177. Positions lysine 39–glycine 59 are enriched in basic and acidic residues. Gly residues predominate over residues phenylalanine 109–glycine 144. Positions glycine 163–aspartate 174 are enriched in basic and acidic residues. The interval asparagine 302–proline 316 is RNA gate.

Belongs to the eIF-3 subunit D family. In terms of assembly, component of the eukaryotic translation initiation factor 3 (eIF-3) complex.

The protein resides in the cytoplasm. MRNA cap-binding component of the eukaryotic translation initiation factor 3 (eIF-3) complex, which is involved in protein synthesis of a specialized repertoire of mRNAs and, together with other initiation factors, stimulates binding of mRNA and methionyl-tRNAi to the 40S ribosome. The eIF-3 complex specifically targets and initiates translation of a subset of mRNAs involved in cell proliferation. In the eIF-3 complex, eif3d specifically recognizes and binds the 7-methylguanosine cap of a subset of mRNAs. The chain is Eukaryotic translation initiation factor 3 subunit D from Phaeosphaeria nodorum (strain SN15 / ATCC MYA-4574 / FGSC 10173) (Glume blotch fungus).